A 146-amino-acid chain; its full sequence is Hemoglobin subunit beta (146 aa).

N-acetylvaline is present on V1. The region spanning 2-146 is the Globin domain; the sequence is HLTPDEKNAV…VANALAHKYH (145 aa). Position 12 is a phosphothreonine (T12). A Phosphoserine modification is found at S44. K59 carries the N6-acetyllysine modification. H63 serves as a coordination point for heme b. The residue at position 82 (K82) is an N6-acetyllysine. H92 lines the heme b pocket. An S-nitrosocysteine modification is found at C93. An N6-acetyllysine modification is found at K144.

It belongs to the globin family. As to quaternary structure, heterotetramer of two alpha chains and two beta chains. In terms of tissue distribution, red blood cells.

Functionally, involved in oxygen transport from the lung to the various peripheral tissues. This chain is Hemoglobin subunit beta (HBB), found in Piliocolobus badius (Western red colobus).